Consider the following 479-residue polypeptide: Poly(A) polymerase catalytic subunit (479 aa).

Active-site residues include Asp202 and Asp204. Residues Asp202, Asp204, and Asp253 each contribute to the Ca(2+) site.

The protein belongs to the poxviridae poly(A) polymerase catalytic subunit family. Heterodimer of a large (catalytic) subunit and a small (regulatory) subunit.

The catalysed reaction is RNA(n) + ATP = RNA(n)-3'-adenine ribonucleotide + diphosphate. Functionally, polymerase that creates the 3'-poly(A) tail of mRNA's. In Cynomys gunnisoni (Gunnison's prairie dog), this protein is Poly(A) polymerase catalytic subunit (OPG063).